The sequence spans 598 residues: Elongation factor 4 (598 aa).

In terms of domain architecture, tr-type G spans 2–184 (DNVRNFAIIA…AIITKLPAPQ (183 aa)). Residues 14–19 (DHGKST) and 131–134 (NKVD) each bind GTP.

This sequence belongs to the TRAFAC class translation factor GTPase superfamily. Classic translation factor GTPase family. LepA subfamily.

The protein localises to the cell membrane. The enzyme catalyses GTP + H2O = GDP + phosphate + H(+). In terms of biological role, required for accurate and efficient protein synthesis under certain stress conditions. May act as a fidelity factor of the translation reaction, by catalyzing a one-codon backward translocation of tRNAs on improperly translocated ribosomes. Back-translocation proceeds from a post-translocation (POST) complex to a pre-translocation (PRE) complex, thus giving elongation factor G a second chance to translocate the tRNAs correctly. Binds to ribosomes in a GTP-dependent manner. This chain is Elongation factor 4, found in Wolbachia sp. subsp. Brugia malayi (strain TRS).